Consider the following 522-residue polypeptide: Maturase K (522 aa).

This sequence belongs to the intron maturase 2 family. MatK subfamily.

It localises to the plastid. The protein localises to the chloroplast. Functionally, usually encoded in the trnK tRNA gene intron. Probably assists in splicing its own and other chloroplast group II introns. The chain is Maturase K from Gladiolus papilio (Goldblotch gladiolus).